Here is a 443-residue protein sequence, read N- to C-terminus: FLYWCH-type zinc finger-containing protein peb-1 (443 aa).

A disordered region spans residues Lys22–Ser49. Residues Ser25–Ser42 are compositionally biased toward low complexity. The required for DNA-binding DNA-binding region spans Met46 to Pro203. An FLYWCH-type zinc finger spans residues Ile69–His135. Positions Pro251–Ser271 are disordered.

Its subcellular location is the nucleus. Its function is as follows. Putative transcription factor. Binds to specific sequence motif 5'-[TC][AGT]TGCC[GA][AT]-3' in regulatory elements of target genes such as myosin myo-2. May modulate gene expression, perhaps acting in opposition to transcription factor pha-4. Involved in morphogenesis, perhaps especially in formation of the pharynx. Plays roles in molting, feeding and morphology. The polypeptide is FLYWCH-type zinc finger-containing protein peb-1 (Caenorhabditis elegans).